A 127-amino-acid chain; its full sequence is Large ribosomal subunit protein bL17 (127 aa).

The protein belongs to the bacterial ribosomal protein bL17 family. Part of the 50S ribosomal subunit. Contacts protein L32.

This chain is Large ribosomal subunit protein bL17, found in Lacticaseibacillus casei (strain BL23) (Lactobacillus casei).